The following is a 369-amino-acid chain: DNA replication and repair protein RecF (369 aa).

ATP is bound at residue 30–37 (GQNAQGKT).

The protein belongs to the RecF family.

Its subcellular location is the cytoplasm. The RecF protein is involved in DNA metabolism; it is required for DNA replication and normal SOS inducibility. RecF binds preferentially to single-stranded, linear DNA. It also seems to bind ATP. The sequence is that of DNA replication and repair protein RecF from Acetivibrio thermocellus (strain ATCC 27405 / DSM 1237 / JCM 9322 / NBRC 103400 / NCIMB 10682 / NRRL B-4536 / VPI 7372) (Clostridium thermocellum).